A 326-amino-acid polypeptide reads, in one-letter code: Vitamin B12 import system permease protein BtuC (326 aa).

Helical transmembrane passes span Trp15–Glu35, Leu61–Phe81, Pro88–Gly108, Leu112–Leu132, Leu146–Phe166, Gly184–Ile204, Gly240–Ile260, Val274–Ala294, and Glu302–Leu322.

It belongs to the binding-protein-dependent transport system permease family. FecCD subfamily. In terms of assembly, the complex is composed of two ATP-binding proteins (BtuD), two transmembrane proteins (BtuC) and a solute-binding protein (BtuF).

Its subcellular location is the cell inner membrane. Part of the ABC transporter complex BtuCDF involved in vitamin B12 import. Involved in the translocation of the substrate across the membrane. This is Vitamin B12 import system permease protein BtuC from Salmonella enteritidis PT4 (strain P125109).